Reading from the N-terminus, the 341-residue chain is tRNA N6-adenosine threonylcarbamoyltransferase (341 aa).

Residues His-117 and His-121 each contribute to the Fe cation site. Residues 139–143 (VVSGG), Asp-172, Gly-185, Asp-189, and Asn-278 contribute to the substrate site. Asp-307 contributes to the Fe cation binding site.

Belongs to the KAE1 / TsaD family. It depends on Fe(2+) as a cofactor.

It is found in the cytoplasm. It carries out the reaction L-threonylcarbamoyladenylate + adenosine(37) in tRNA = N(6)-L-threonylcarbamoyladenosine(37) in tRNA + AMP + H(+). Its function is as follows. Required for the formation of a threonylcarbamoyl group on adenosine at position 37 (t(6)A37) in tRNAs that read codons beginning with adenine. Is involved in the transfer of the threonylcarbamoyl moiety of threonylcarbamoyl-AMP (TC-AMP) to the N6 group of A37, together with TsaE and TsaB. TsaD likely plays a direct catalytic role in this reaction. The polypeptide is tRNA N6-adenosine threonylcarbamoyltransferase (Bacillus licheniformis (strain ATCC 14580 / DSM 13 / JCM 2505 / CCUG 7422 / NBRC 12200 / NCIMB 9375 / NCTC 10341 / NRRL NRS-1264 / Gibson 46)).